A 416-amino-acid polypeptide reads, in one-letter code: Ferrochelatase, mitochondrial (416 aa).

A mitochondrion-targeting transit peptide spans M1–R47. Residues E41–T62 form a disordered region. K50 carries the post-translational modification N6-acetyllysine. Residues R108, Y116, and S123 each coordinate protoporphyrin IX. The residue at position 131 (K131) is an N6-succinyllysine. Residue C189 participates in [2Fe-2S] cluster binding. H223 is an active-site residue. The residue at position 283 (K283) is an N6-acetyllysine; alternate. K283 bears the N6-succinyllysine; alternate mark. Residue D376 is part of the active site. The [2Fe-2S] cluster site is built by C396, C399, and C404. K408 bears the N6-acetyllysine; alternate mark. An N6-succinyllysine; alternate modification is found at K408.

It belongs to the ferrochelatase family. In terms of assembly, homodimer. Homotetramer. Interaction with PGRMC1; the interaction results in decreased FECH activity. Interacts with ABCB10 and SLC25A37; this interaction forms an oligomeric complex. Forms a complex with ABCB7 and ABCB10, where a dimeric FECH bridges ABCB7 and ABCB10 homodimers; this complex may be required for cellular iron homeostasis, mitochondrial function and heme biosynthesis. Interacts with ABCB7 and ABCB10. [2Fe-2S] cluster is required as a cofactor.

Its subcellular location is the mitochondrion inner membrane. It carries out the reaction heme b + 2 H(+) = protoporphyrin IX + Fe(2+). It functions in the pathway porphyrin-containing compound metabolism; protoheme biosynthesis; protoheme from protoporphyrin-IX: step 1/1. Functionally, catalyzes the ferrous insertion into protoporphyrin IX and participates in the terminal step in the heme biosynthetic pathway. The sequence is that of Ferrochelatase, mitochondrial from Bos taurus (Bovine).